Reading from the N-terminus, the 146-residue chain is Large ribosomal subunit protein uL15 (146 aa).

Positions 1-51 are disordered; that stretch reads MKLHELQPAAGSRKVRNRVGRGTSSGNGKTSGRGQKGQKARSGGGVRLGFE. Composition is skewed to gly residues over residues 23–35 and 42–51; these read TSSG…GRGQ and SGGGVRLGFE.

The protein belongs to the universal ribosomal protein uL15 family. In terms of assembly, part of the 50S ribosomal subunit.

Its function is as follows. Binds to the 23S rRNA. The polypeptide is Large ribosomal subunit protein uL15 (Streptococcus sanguinis (strain SK36)).